Consider the following 118-residue polypeptide: MPFVELDTSLPAGRVPAGLEKRLCAATAAILSKPEDRVNVTVRSGLAMVVNGSAEPSAQLLVSSIGVVGTAEENRGHSARFFEFLTKELDLAEDRIMIRFFPLERWQIGKKGTVMTFL.

Residue proline 2 is modified to N-acetylproline. Lysine 33 bears the N6-acetyllysine mark.

It belongs to the MIF family. As to quaternary structure, homotrimer.

Its subcellular location is the cytoplasm. It carries out the reaction D-dopachrome + H(+) = 5,6-dihydroxyindole + CO2. Functionally, tautomerization of D-dopachrome with decarboxylation to give 5,6-dihydroxyindole (DHI). This is D-dopachrome decarboxylase (DDT) from Bos taurus (Bovine).